We begin with the raw amino-acid sequence, 422 residues long: Serine--tRNA ligase (422 aa).

230-232 is a binding site for L-serine; sequence TAE. Position 261–263 (261–263) interacts with ATP; that stretch reads RNE. Glu284 serves as a coordination point for L-serine. Residue 347–350 coordinates ATP; that stretch reads EVSS. Ser383 serves as a coordination point for L-serine.

It belongs to the class-II aminoacyl-tRNA synthetase family. Type-1 seryl-tRNA synthetase subfamily. In terms of assembly, homodimer. The tRNA molecule binds across the dimer.

It localises to the cytoplasm. It catalyses the reaction tRNA(Ser) + L-serine + ATP = L-seryl-tRNA(Ser) + AMP + diphosphate + H(+). The enzyme catalyses tRNA(Sec) + L-serine + ATP = L-seryl-tRNA(Sec) + AMP + diphosphate + H(+). Its pathway is aminoacyl-tRNA biosynthesis; selenocysteinyl-tRNA(Sec) biosynthesis; L-seryl-tRNA(Sec) from L-serine and tRNA(Sec): step 1/1. Catalyzes the attachment of serine to tRNA(Ser). Is also able to aminoacylate tRNA(Sec) with serine, to form the misacylated tRNA L-seryl-tRNA(Sec), which will be further converted into selenocysteinyl-tRNA(Sec). This is Serine--tRNA ligase from Herpetosiphon aurantiacus (strain ATCC 23779 / DSM 785 / 114-95).